The chain runs to 375 residues: Alcohol dehydrogenase 1 (375 aa).

A1 is subject to N-acetylalanine. The Zn(2+) site is built by C46, H68, C98, C101, C104, C112, and C175. Residues 200–205 (GLGGVG), D224, K229, 293–295 (VGL), and R370 contribute to the NAD(+) site.

Belongs to the zinc-containing alcohol dehydrogenase family. Class-I subfamily. Zn(2+) serves as cofactor.

The protein resides in the cytoplasm. It catalyses the reaction a primary alcohol + NAD(+) = an aldehyde + NADH + H(+). It carries out the reaction a secondary alcohol + NAD(+) = a ketone + NADH + H(+). The polypeptide is Alcohol dehydrogenase 1 (Pelophylax perezi (Perez's frog)).